The following is a 140-amino-acid chain: Large-conductance mechanosensitive channel (140 aa).

2 helical membrane-spanning segments follow: residues 16 to 36 (VVDL…VDSI) and 86 to 106 (GSFL…FLMV).

The protein belongs to the MscL family. As to quaternary structure, homopentamer.

The protein localises to the cell inner membrane. Its function is as follows. Channel that opens in response to stretch forces in the membrane lipid bilayer. May participate in the regulation of osmotic pressure changes within the cell. This chain is Large-conductance mechanosensitive channel, found in Anaeromyxobacter sp. (strain K).